Here is a 223-residue protein sequence, read N- to C-terminus: Adenylate kinase 4, mitochondrial (223 aa).

15 to 20 (GSGKGT) serves as a coordination point for a ribonucleoside 5'-triphosphate. The interval 35–64 (SSGHLLRENLKTGTEVGDVAKQYLEKGLLV) is NMP. AMP is bound by residues serine 36 and arginine 41. At lysine 60 the chain carries N6-succinyllysine. AMP-binding positions include 62 to 64 (LLV), 89 to 92 (GFPR), and glutamine 96. The tract at residues 125–162 (RRWIHPSSGRVYNLDFNPPQVQGIDDITGEPLVQQEDD) is LID. Residues arginine 126 and 135–136 (VY) contribute to the a ribonucleoside 5'-triphosphate site. An AMP-binding site is contributed by arginine 170. N6-acetyllysine is present on lysine 175. Residues lysine 179 and lysine 186 each carry the N6-acetyllysine; alternate modification. Lysine 179 and lysine 186 each carry N6-succinyllysine; alternate. Threonine 199 lines the a ribonucleoside 5'-triphosphate pocket.

This sequence belongs to the adenylate kinase family. AK3 subfamily. As to quaternary structure, monomer. Interacts with SLC25A5/ANT2. In terms of tissue distribution, expressed in kidney, liver, stomach, brain, spinal cord, heart, ovary, oviduct, colon, jejunum, ileum and testis (at protein level). In the brain, expressed in the pyramidal cells of the cerebrum and glial cells in the cerebellum (at protein level). In the heart, expressed by myocytes (at protein level). In the kidney, expressed in the proximal to distal tubule in the cortex and the outer and inner zones of the medulla (at protein level). In the stomach, expressed in stratified squamous epithelia in the forestomach and in the gastric pit and mucus producing cells of the glandular stomach (at protein level). Expressed in epithelial cells of the jejunum, ileum, and colon (at protein level). In the testis, expressed by spermatocytes (at protein level). In the ovaries, expressed by oocytes, follicular epithelial cells, and corpus luteum cells (at protein level). In the oviduct, expressed in the epithelia of the isthmus and the ciliated cells of the ampulla (at protein level). Expressed in the pyramidal cells in the hippocampus.

It localises to the mitochondrion matrix. The enzyme catalyses a ribonucleoside 5'-phosphate + ATP = a ribonucleoside 5'-diphosphate + ADP. It catalyses the reaction AMP + ATP = 2 ADP. The catalysed reaction is GTP + AMP = GDP + ADP. It carries out the reaction CMP + ATP = CDP + ADP. The enzyme catalyses GTP + CMP = CDP + GDP. It catalyses the reaction dAMP + ATP = dADP + ADP. The catalysed reaction is dCMP + ATP = dCDP + ADP. It carries out the reaction a 2'-deoxyribonucleoside 5'-diphosphate + ATP = a 2'-deoxyribonucleoside 5'-triphosphate + ADP. The enzyme catalyses a ribonucleoside 5'-diphosphate + ATP = a ribonucleoside 5'-triphosphate + ADP. It catalyses the reaction GDP + ATP = GTP + ADP. The catalysed reaction is CDP + GTP = CTP + GDP. It carries out the reaction CDP + ATP = CTP + ADP. The enzyme catalyses UDP + ATP = UTP + ADP. It catalyses the reaction GTP + UDP = UTP + GDP. The catalysed reaction is dADP + GTP = dATP + GDP. It carries out the reaction dCDP + GTP = dCTP + GDP. The enzyme catalyses dCDP + ATP = dCTP + ADP. It catalyses the reaction dGDP + ATP = dGTP + ADP. The catalysed reaction is dTDP + GTP = dTTP + GDP. It carries out the reaction dTDP + ATP = dTTP + ADP. Broad-specificity mitochondrial nucleoside phosphate kinase involved in cellular nucleotide homeostasis by catalyzing nucleoside-phosphate interconversions. Similar to other adenylate kinases, preferentially catalyzes the phosphorylation of the nucleoside monophosphate AMP with ATP as phosphate donor to produce ADP. Phosphorylates only AMP when using GTP as phosphate donor. In vitro, can also catalyze the phosphorylation of CMP, dAMP and dCMP and use GTP as an alternate phosphate donor. Moreover, exhibits a diphosphate kinase activity, producing ATP, CTP, GTP, UTP, TTP, dATP, dCTP and dGTP from the corresponding diphosphate substrates with either ATP or GTP as phosphate donors. Plays a role in controlling cellular ATP levels by regulating phosphorylation and activation of the energy sensor protein kinase AMPK. Plays a protective role in the cellular response to oxidative stress. This chain is Adenylate kinase 4, mitochondrial, found in Mus musculus (Mouse).